The primary structure comprises 447 residues: MRSPGAQDNVSVSQGMRAMFYMMEPSETAFQTVEEVPDYVKKATPFFIFLILLELVISWILKGKPSGRLDDALTSISAGVVSRLPSLFFRSLEVTSYIYIWENYRLLELPWDSTWTWYFTFLGVDFGYYWFHRMAHEINIFWAAHQAHHSSEDYNLSTALRQSVLQQYSSWVFYCPLALFIPPSVFAVHIQFNLLYQFWIHTEIIRTLGPLEVILNTPSHHRVHHGRNRYCIDKNYAGTLIIWDRIFGTFEAENEQVIYGLTHPIGTFEPFNVQFHHLLYIWTTFWTTPGFCHKFSVLFKGPGWGPGKPRLGLSEEIPEVTGQEVPFSSSASQLLKIYTVLQFAVMLAFYEETFANTAVLSQVTLLLRIFFFILTLTSIGFLLDQRSKAATMETFRCLLFLTLHRFGHLKPLIPSLSFAFEIFFSVCIAFWGVRSITQLTSGSWKKP.

A run of 2 helical transmembrane segments spans residues 43–63 and 111–131; these read ATPF…ILKG and WDST…YYWF. The region spanning 119–249 is the Fatty acid hydroxylase domain; the sequence is FTFLGVDFGY…LIIWDRIFGT (131 aa). The Histidine box-1 motif lies at 132-136; sequence HRMAH. The Histidine box-2 motif lies at 145–149; sequence HQAHH. The helical transmembrane segment at 170-190 threads the bilayer; it reads SWVFYCPLALFIPPSVFAVHI. Positions 221 to 225 match the Histidine box-3 motif; that stretch reads HRVHH. Helical transmembrane passes span 340 to 360, 363 to 383, and 413 to 433; these read VLQF…TAVL, VTLL…GFLL, and IPSL…FWGV.

Belongs to the sterol desaturase family. TMEM195 subfamily. Requires Fe cation as cofactor. Highly expressed in lever and small intestine.

The protein resides in the endoplasmic reticulum membrane. The catalysed reaction is 1-O-(1,2-saturated-alkyl)-sn-glycerol + (6R)-L-erythro-5,6,7,8-tetrahydrobiopterin + O2 = a 1-(1-hydroxyalkyl)-sn-glycerol + (6R)-L-erythro-6,7-dihydrobiopterin + H2O. Functionally, glyceryl-ether monooxygenase that cleaves the O-alkyl bond of ether lipids. Ether lipids are essential components of brain membranes. This chain is Alkylglycerol monooxygenase (Agmo), found in Mus musculus (Mouse).